The following is a 325-amino-acid chain: Probable ABC transporter permease YtrD (325 aa).

8 consecutive transmembrane segments (helical) span residues 16–36, 63–83, 113–133, 146–166, 179–199, 233–253, 272–292, and 298–318; these read VALVITILVFILGNPLSILNM, SSFISLFWIWGVVLAVSQLGI, MVIVVPQLIGYVLSVLLIMLL, LGMIIVSMLAYSLVMAGGALT, VAISPFLLISLPVINLEILFG, YLVIPAIMTIIFYIIGYISFV, PVQIIVIIIGIMGFGYFGFTA, and GYLIGMGTGAVIGFLISYFAI.

The protein belongs to the ABC-5 integral membrane protein family. In terms of assembly, the complex is composed of 2 ATP-binding proteins (YtrB and YtrE), 2 transmembrane proteins (YtrC and YtrD) and a solute-binding protein (YtrF).

Its subcellular location is the cell membrane. Part of the ABC transporter complex YtrBCDEF that plays a role in acetoin utilization during stationary phase and sporulation. The sequence is that of Probable ABC transporter permease YtrD (ytrD) from Bacillus subtilis (strain 168).